Consider the following 466-residue polypeptide: Phosphomethylpyrimidine synthase (466 aa).

Substrate-binding positions include asparagine 80, methionine 109, tyrosine 139, histidine 175, 195–197, 236–239, and glutamate 275; these read SRG and DSLR. A Zn(2+)-binding site is contributed by histidine 279. Position 302 (tyrosine 302) interacts with substrate. Residue histidine 343 participates in Zn(2+) binding. [4Fe-4S] cluster is bound by residues cysteine 423, cysteine 426, and cysteine 431.

Belongs to the ThiC family. The cofactor is [4Fe-4S] cluster.

It catalyses the reaction 5-amino-1-(5-phospho-beta-D-ribosyl)imidazole + S-adenosyl-L-methionine = 4-amino-2-methyl-5-(phosphooxymethyl)pyrimidine + CO + 5'-deoxyadenosine + formate + L-methionine + 3 H(+). It participates in cofactor biosynthesis; thiamine diphosphate biosynthesis. Catalyzes the synthesis of the hydroxymethylpyrimidine phosphate (HMP-P) moiety of thiamine from aminoimidazole ribotide (AIR) in a radical S-adenosyl-L-methionine (SAM)-dependent reaction. The sequence is that of Phosphomethylpyrimidine synthase from Prochlorococcus marinus (strain NATL1A).